The primary structure comprises 303 residues: Glyceraldehyde-3-phosphate dehydrogenase (303 aa).

NAD(+) contacts are provided by residues 6–7 (RI), D28, R72, and T114. D-glyceraldehyde 3-phosphate contacts are provided by residues 143 to 145 (SCT), T174, 203 to 204 (TG), and R226. C144 serves as the catalytic Nucleophile.

It belongs to the glyceraldehyde-3-phosphate dehydrogenase family. In terms of assembly, homotetramer.

The protein resides in the cytoplasm. It catalyses the reaction D-glyceraldehyde 3-phosphate + phosphate + NAD(+) = (2R)-3-phospho-glyceroyl phosphate + NADH + H(+). The protein operates within carbohydrate degradation; glycolysis; pyruvate from D-glyceraldehyde 3-phosphate: step 1/5. Functionally, catalyzes the oxidative phosphorylation of glyceraldehyde 3-phosphate (G3P) to 1,3-bisphosphoglycerate (BPG) using the cofactor NAD. The first reaction step involves the formation of a hemiacetal intermediate between G3P and a cysteine residue, and this hemiacetal intermediate is then oxidized to a thioester, with concomitant reduction of NAD to NADH. The reduced NADH is then exchanged with the second NAD, and the thioester is attacked by a nucleophilic inorganic phosphate to produce BPG. The sequence is that of Glyceraldehyde-3-phosphate dehydrogenase (gap) from Klebsiella pneumoniae.